The following is a 219-amino-acid chain: MGVTILQPYPVENKSGAQTIEFLVKRVLALGAVQVGHFLVDCETYTSIPQIGATKTVHILHNSEQPASVFSILDTGTKQIPLVTDGLFDLLMTRISPVYTSKKQTKIESKGPRFEFGDFLIKLGSVTMSQNFKGVLVEVEYRPCLVASSCWELMREFLQGFLGSNVSNTIPAYFAQRININTNHTKANDVYQPIDTINQYLEHFTNYRKQTTPVVAPRV.

This sequence belongs to the Mediator complex subunit 20 family. Component of the Mediator complex.

Its subcellular location is the nucleus. Component of the Mediator complex, a coactivator involved in the regulated transcription of nearly all RNA polymerase II-dependent genes. Mediator functions as a bridge to convey information from gene-specific regulatory proteins to the basal RNA polymerase II transcription machinery. Mediator is recruited to promoters by direct interactions with regulatory proteins and serves as a scaffold for the assembly of a functional preinitiation complex with RNA polymerase II and the general transcription factors. This chain is Mediator of RNA polymerase II transcription subunit 20 (MED20), found in Aedes aegypti (Yellowfever mosquito).